Here is a 196-residue protein sequence, read N- to C-terminus: DNA replication complex GINS protein PSF1 (196 aa).

Belongs to the GINS1/PSF1 family. Component of the GINS complex which is a heterotetramer of gins1/psf1, gins2/psf2, gins3/psf3 and gins4/sld5. Component of the CMG helicase complex, composed of the mcm2-7 complex, the GINS complex and cdc45.

The protein resides in the nucleus. The protein localises to the chromosome. Required for correct functioning of the GINS complex, a complex that plays an essential role in the initiation of DNA replication, and progression of DNA replication forks. GINS complex is a core component of CDC45-MCM-GINS (CMG) helicase, the molecular machine that unwinds template DNA during replication, and around which the replisome is built. The protein is DNA replication complex GINS protein PSF1 of Xenopus laevis (African clawed frog).